Reading from the N-terminus, the 152-residue chain is uncharacterized protein (152 aa).

This is an uncharacterized protein from Methanocaldococcus jannaschii (strain ATCC 43067 / DSM 2661 / JAL-1 / JCM 10045 / NBRC 100440) (Methanococcus jannaschii).